The primary structure comprises 387 residues: MDGSDGARRVLVINSGSSSLKFQLVDPESGVAASTGIVERIGEESSPVPDHDAALRRAFDMLAGDGVDLNTAGLVAVGHRVVHGGNTFYRPTVLDDAVIARLHELSELAPLHNPPALLGIEVARRLLPGIAHVAVFDTGFFHDLPPAAATYAIDRELADRWQIRRYGFHGTSHRYVSEQAAAFLDRPLRGLKQIVLHLGNGCSASAIAGTRPLDTSMGLTPLEGLVMGTRSGDIDPSVVSYLCHTAGMGVDDVESMLNHRSGVVGLSGVRDFRRLRELIESGDGAAQLAYSVFTHRLRKYIGAYLAVLGHTDVISFTAGIGENDAAVRRDAVSGMEELGIVLDERRNLPGAKGARQISADDSPITVLVVPTNEELAIARDCVRVLGG.

Asn14 serves as a coordination point for Mg(2+). Position 21 (Lys21) interacts with ATP. Arg80 contacts substrate. The Proton donor/acceptor role is filled by Asp137. ATP is bound by residues 197–201 (HLGNG), 271–273 (DFR), and 319–323 (GIGEN). Residue Glu373 coordinates Mg(2+).

Belongs to the acetokinase family. Homodimer. It depends on Mg(2+) as a cofactor. Mn(2+) is required as a cofactor.

The protein resides in the cytoplasm. It catalyses the reaction acetate + ATP = acetyl phosphate + ADP. It functions in the pathway metabolic intermediate biosynthesis; acetyl-CoA biosynthesis; acetyl-CoA from acetate: step 1/2. Its function is as follows. Catalyzes the formation of acetyl phosphate from acetate and ATP. Can also catalyze the reverse reaction. The chain is Acetate kinase from Mycobacterium avium (strain 104).